The sequence spans 488 residues: Bifunctional pantoate ligase/cytidylate kinase (488 aa).

Residue 1 to 8 (MGALHRAH) coordinates ATP. The pantoate--beta-alanine ligase stretch occupies residues 1–251 (MGALHRAHGQ…CGETRLIDHT (251 aa)). The Proton donor role is filled by H8. Residue Q36 coordinates (R)-pantoate. Q36 provides a ligand contact to beta-alanine. 125–128 (GEKD) lines the ATP pocket. Q131 is a (R)-pantoate binding site. Residues V154 and 162–165 (CSSR) contribute to the ATP site. Positions 252-488 (FLMSRQPIVA…PEEVWPTPGS (237 aa)) are cytidylate kinase.

This sequence in the N-terminal section; belongs to the pantothenate synthetase family. In the C-terminal section; belongs to the cytidylate kinase family. Type 1 subfamily.

The protein resides in the cytoplasm. The enzyme catalyses (R)-pantoate + beta-alanine + ATP = (R)-pantothenate + AMP + diphosphate + H(+). The catalysed reaction is CMP + ATP = CDP + ADP. It catalyses the reaction dCMP + ATP = dCDP + ADP. The protein operates within cofactor biosynthesis; (R)-pantothenate biosynthesis; (R)-pantothenate from (R)-pantoate and beta-alanine: step 1/1. Catalyzes the condensation of pantoate with beta-alanine in an ATP-dependent reaction via a pantoyl-adenylate intermediate. In terms of biological role, catalyzes the transfer of a phosphate group from ATP to either CMP or dCMP to form CDP or dCDP and ADP, respectively. The polypeptide is Bifunctional pantoate ligase/cytidylate kinase (Prochlorococcus marinus (strain MIT 9303)).